Reading from the N-terminus, the 783-residue chain is FYN-binding protein 1 (783 aa).

Composition is skewed to polar residues over residues 1 to 18 (MAKY…SVNS) and 25 to 45 (GPNS…QGNA). The interval 1-502 (MAKYNTGGNP…KEKKEQEIKK (502 aa)) is disordered. N6-acetyllysine is present on lysine 3. Residues serine 28 and serine 46 each carry the phosphoserine modification. A compositionally biased stretch (basic and acidic residues) spans 69-79 (SSEEKPDKEPK). Serine 225 bears the Phosphoserine mark. Composition is skewed to basic and acidic residues over residues 240-252 (PARE…DHAG) and 278-290 (NGEE…KIDA). Position 329 is a phosphoserine (serine 329). A compositionally biased stretch (pro residues) spans 345 to 363 (KPLPPLFTLGPPPPKPNRP). The tract at residues 348–448 (PPLFTLGPPP…QDGVTHSDGA (101 aa)) is interaction with SKAP1. Residues 374–387 (TSSGNSTSKGQTSY) are compositionally biased toward polar residues. Residues 392–424 (LPPPPPSHPASQPPLPASHPSQPPVPSLPPRNI) show a composition bias toward pro residues. Acidic residues predominate over residues 451–465 (LDEEQDSEGETYEDI). Residues 456–507 (DSEGETYEDIEASKEREKKREKEEKKRLELEKKEQKEKEKKEQEIKKKFKLT) are a coiled coil. Serine 457 bears the Phosphoserine mark. Positions 462 to 465 (YEDI) match the SH2-binding motif. Residues 466–501 (EASKEREKKREKEEKKRLELEKKEQKEKEKKEQEIK) show a composition bias toward basic and acidic residues. The Nuclear localization signal motif lies at 469-505 (KEREKKREKEEKKRLELEKKEQKEKEKKEQEIKKKFK). The SH3 1 domain occupies 511 to 572 (QVIHLAKACC…KTTAVEIDYD (62 aa)). Position 571 is a phosphotyrosine (tyrosine 571). Phosphoserine is present on residues serine 573 and serine 580. The short motif at 595-598 (YDDV) is the SH2-binding; to LCP2 element. Residues 598 to 678 (VAEQDDISSH…GTNVGKAKTE (81 aa)) are disordered. Acidic residues-rich tracts occupy residues 620-635 (PDDD…DADD) and 646-656 (MGDEVYDDVDT). An SH2-binding; to FYN motif is present at residues 625–628 (YDGI). Tyrosine 651 is subject to Phosphotyrosine. The Nuclear localization signal motif lies at 674-700 (KAKTEEKDLKKLKKQEKEEKDFRKKFK). The region spanning 700–768 (KYDGEIRVLY…LRSYLADNDG (69 aa)) is the SH3 2 domain.

In terms of assembly, part of a complex consisting of SKAP2, FYB1 and PTPNS1. Part of a complex consisting of SKAP2, FYB1 and LILRB3. Part of a complex consisting of SKAP1, FYB1 and CLNK. Interacts with CLNK (via its SH2 domain); this interaction allows SKAP1 and FYB1 to recruit FYN to the complex, thus promoting the phosphorylation of CLNK by FYN. Interacts with FYN. Interacts with LCP2. Interacts with SKAP1. Interacts with SKAP2. Interacts with FASLG. Interacts with EVL. Interacts with TMEM47. Interacts with LCK. Post-translationally, T-cell receptor ligation leads to increased tyrosine phosphorylation. As to expression, expressed in hematopoietic tissues such as myeloid and T-cells, spleen and thymus. Not expressed in B-cells, nor in non-lymphoid tissues.

Its subcellular location is the cytoplasm. The protein resides in the nucleus. The protein localises to the cell junction. In terms of biological role, acts as an adapter protein of the FYN and LCP2 signaling cascades in T-cells. May play a role in linking T-cell signaling to remodeling of the actin cytoskeleton. Modulates the expression of IL2. Involved in platelet activation. Prevents the degradation of SKAP1 and SKAP2. May be involved in high affinity immunoglobulin epsilon receptor signaling in mast cells. The sequence is that of FYN-binding protein 1 from Homo sapiens (Human).